The chain runs to 136 residues: Nuclear receptor 2C2-associated protein (136 aa).

It belongs to the NR2C2AP family.

It is found in the nucleus. May act as a repressor of nr2c2-mediated transactivation by suppressing the binding between nr2c2 and its response element in target genes. The chain is Nuclear receptor 2C2-associated protein (nr2c2ap) from Xenopus laevis (African clawed frog).